Reading from the N-terminus, the 300-residue chain is tRNA uridine(34) hydroxylase (300 aa).

In terms of domain architecture, Rhodanese spans 128-222 (ADPEVIVVDT…YLEDVPQAQS (95 aa)). The Cysteine persulfide intermediate role is filled by C182.

It belongs to the TrhO family.

It carries out the reaction uridine(34) in tRNA + AH2 + O2 = 5-hydroxyuridine(34) in tRNA + A + H2O. Its function is as follows. Catalyzes oxygen-dependent 5-hydroxyuridine (ho5U) modification at position 34 in tRNAs. In Deinococcus radiodurans (strain ATCC 13939 / DSM 20539 / JCM 16871 / CCUG 27074 / LMG 4051 / NBRC 15346 / NCIMB 9279 / VKM B-1422 / R1), this protein is tRNA uridine(34) hydroxylase.